The primary structure comprises 111 residues: Large ribosomal subunit protein uL22 (111 aa).

It belongs to the universal ribosomal protein uL22 family. As to quaternary structure, part of the 50S ribosomal subunit.

Functionally, this protein binds specifically to 23S rRNA; its binding is stimulated by other ribosomal proteins, e.g. L4, L17, and L20. It is important during the early stages of 50S assembly. It makes multiple contacts with different domains of the 23S rRNA in the assembled 50S subunit and ribosome. In terms of biological role, the globular domain of the protein is located near the polypeptide exit tunnel on the outside of the subunit, while an extended beta-hairpin is found that lines the wall of the exit tunnel in the center of the 70S ribosome. The protein is Large ribosomal subunit protein uL22 of Wigglesworthia glossinidia brevipalpis.